A 371-amino-acid chain; its full sequence is Maltose/maltodextrin import ATP-binding protein MalK (371 aa).

Residues 4-234 (VQLQNVTKAW…PADRFVAGFI (231 aa)) form the ABC transporter domain. 36 to 43 (GPSGCGKS) lines the ATP pocket.

It belongs to the ABC transporter superfamily. Maltooligosaccharide importer (TC 3.A.1.1.1) family. As to quaternary structure, the complex is composed of two ATP-binding proteins (MalK), two transmembrane proteins (MalG and MalK) and a solute-binding protein (MalE).

The protein localises to the cell inner membrane. The catalysed reaction is D-maltose(out) + ATP + H2O = D-maltose(in) + ADP + phosphate + H(+). Part of the ABC transporter complex MalEFGK involved in maltose/maltodextrin import. Responsible for energy coupling to the transport system. This Escherichia coli O6:K15:H31 (strain 536 / UPEC) protein is Maltose/maltodextrin import ATP-binding protein MalK.